Consider the following 96-residue polypeptide: Putative pterin-4-alpha-carbinolamine dehydratase (96 aa).

Belongs to the pterin-4-alpha-carbinolamine dehydratase family.

It carries out the reaction (4aS,6R)-4a-hydroxy-L-erythro-5,6,7,8-tetrahydrobiopterin = (6R)-L-erythro-6,7-dihydrobiopterin + H2O. This Prochlorococcus marinus subsp. pastoris (strain CCMP1986 / NIES-2087 / MED4) protein is Putative pterin-4-alpha-carbinolamine dehydratase.